A 776-amino-acid chain; its full sequence is Methionine--tRNA ligase (776 aa).

The 'HIGH' region signature appears at 10–20 (PYSNGPIHLGH). Zn(2+)-binding residues include Cys-143, Cys-146, Cys-156, and Cys-159. The short motif at 375-379 (KFSKS) is the 'KMSKS' region element. Position 378 (Lys-378) interacts with ATP. A tRNA-binding domain is found at 676 to 776 (DFAKLDMRVG…KPISLGSKVR (101 aa)).

It belongs to the class-I aminoacyl-tRNA synthetase family. MetG type 1 subfamily. As to quaternary structure, homodimer. Zn(2+) is required as a cofactor.

The protein localises to the cytoplasm. The catalysed reaction is tRNA(Met) + L-methionine + ATP = L-methionyl-tRNA(Met) + AMP + diphosphate. In terms of biological role, is required not only for elongation of protein synthesis but also for the initiation of all mRNA translation through initiator tRNA(fMet) aminoacylation. This chain is Methionine--tRNA ligase (metG), found in Nanoarchaeum equitans (strain Kin4-M).